The following is a 467-amino-acid chain: Glutamate--tRNA ligase (467 aa).

The 'HIGH' region motif lies at 9–19; sequence PSPTGYLHIGG. Positions 237 to 241 match the 'KMSKS' region motif; the sequence is KLSKR. K240 is an ATP binding site.

This sequence belongs to the class-I aminoacyl-tRNA synthetase family. Glutamate--tRNA ligase type 1 subfamily. In terms of assembly, monomer.

It is found in the cytoplasm. The enzyme catalyses tRNA(Glu) + L-glutamate + ATP = L-glutamyl-tRNA(Glu) + AMP + diphosphate. Functionally, catalyzes the attachment of glutamate to tRNA(Glu) in a two-step reaction: glutamate is first activated by ATP to form Glu-AMP and then transferred to the acceptor end of tRNA(Glu). The chain is Glutamate--tRNA ligase from Xanthomonas oryzae pv. oryzae (strain MAFF 311018).